Here is a 226-residue protein sequence, read N- to C-terminus: Orotidine 5'-phosphate decarboxylase (226 aa).

Substrate contacts are provided by residues Asp8, Lys30, 58-67, Thr117, Arg177, Gln186, Gly206, and Arg207; that span reads DLKLYDIPNT. Lys60 (proton donor) is an active-site residue.

Belongs to the OMP decarboxylase family. Type 1 subfamily. In terms of assembly, homodimer.

The catalysed reaction is orotidine 5'-phosphate + H(+) = UMP + CO2. It participates in pyrimidine metabolism; UMP biosynthesis via de novo pathway; UMP from orotate: step 2/2. Its function is as follows. Catalyzes the decarboxylation of orotidine 5'-monophosphate (OMP) to uridine 5'-monophosphate (UMP). This Campylobacter concisus (strain 13826) protein is Orotidine 5'-phosphate decarboxylase.